Here is a 168-residue protein sequence, read N- to C-terminus: 6,7-dimethyl-8-ribityllumazine synthase (168 aa).

Residues Phe24, 58–60 (ALE), and 82–84 (AVI) each bind 5-amino-6-(D-ribitylamino)uracil. 87 to 88 (ET) is a (2S)-2-hydroxy-3-oxobutyl phosphate binding site. His90 (proton donor) is an active-site residue. Asn115 is a 5-amino-6-(D-ribitylamino)uracil binding site. Arg129 lines the (2S)-2-hydroxy-3-oxobutyl phosphate pocket.

It belongs to the DMRL synthase family.

The enzyme catalyses (2S)-2-hydroxy-3-oxobutyl phosphate + 5-amino-6-(D-ribitylamino)uracil = 6,7-dimethyl-8-(1-D-ribityl)lumazine + phosphate + 2 H2O + H(+). The protein operates within cofactor biosynthesis; riboflavin biosynthesis; riboflavin from 2-hydroxy-3-oxobutyl phosphate and 5-amino-6-(D-ribitylamino)uracil: step 1/2. Catalyzes the formation of 6,7-dimethyl-8-ribityllumazine by condensation of 5-amino-6-(D-ribitylamino)uracil with 3,4-dihydroxy-2-butanone 4-phosphate. This is the penultimate step in the biosynthesis of riboflavin. In Paraburkholderia phytofirmans (strain DSM 17436 / LMG 22146 / PsJN) (Burkholderia phytofirmans), this protein is 6,7-dimethyl-8-ribityllumazine synthase.